The primary structure comprises 648 residues: Protein associated with UVRAG as autophagy enhancer (648 aa).

Polar residues-rich tracts occupy residues 131–146 (QESL…TSPS) and 157–173 (PHLT…SSSR). The disordered stretch occupies residues 131–173 (QESLLKNPKTVATSPSPKEGSARSESPHLTASTDDGDARSSSR). Serine 144 bears the Phosphoserine mark. Positions 183–222 (ETFMLPADVEKENLHFYAADIIISVIENMKCNLPNQQQPE) are interaction with UVRAG. Lysine 469, lysine 509, lysine 519, lysine 559, and lysine 619 each carry N6-acetyllysine.

Interacts with UVRAG; the interaction is direct and promotes association with the PI3K/PI3KC3 and HOPS complexes. Interacts with STX17. Phosphorylated by MTOR at Ser-144 under nutrient-rich conditions. Phosphorylation prevents acetylation by KAT5/TIP60 and impairs RUBCNL/PACER function and autophagosome maturation. Under autophagy induction, Phosphorylation by MTOR is repressed, enabling acetylation by KAT5/TIP60. In terms of processing, acetylated by KAT5/TIP60 under autophagy induction, promoting autophagosome maturation and lipid metabolism. Acetylation is prevented by phosphorylation by MTOR. Lys-469 and Lys-559 constitute the key sites for tuning function in autophagy.

The protein localises to the cytoplasmic vesicle. Its subcellular location is the autophagosome membrane. Functionally, regulator of autophagy that promotes autophagosome maturation by facilitating the biogenesis of phosphatidylinositol 3-phosphate (PtdIns(3)P) in late steps of autophagy. Acts by antagonizing RUBCN, thereby stimulating phosphatidylinositol 3-kinase activity of the PI3K/PI3KC3 complex. Following anchorage to the autophagosomal SNARE STX17, promotes the recruitment of PI3K/PI3KC3 and HOPS complexes to the autophagosome to regulate the fusion specificity of autophagosomes with late endosomes/lysosomes. Binds phosphoinositides phosphatidylinositol 3-phosphate (PtdIns(3)P), 4-phosphate (PtdIns(4)P) and 5-phosphate (PtdIns(5)P). In addition to its role in autophagy, acts as a regulator of lipid and glycogen homeostasis. May act as a tumor suppressor. The chain is Protein associated with UVRAG as autophagy enhancer from Mus musculus (Mouse).